A 331-amino-acid polypeptide reads, in one-letter code: Probable allantoicase (331 aa).

This sequence belongs to the allantoicase family.

The enzyme catalyses allantoate + H2O = (S)-ureidoglycolate + urea. It participates in nitrogen metabolism; (S)-allantoin degradation; (S)-ureidoglycolate from allantoate (aminidohydrolase route): step 1/1. In Pseudomonas fluorescens (strain Pf0-1), this protein is Probable allantoicase.